Reading from the N-terminus, the 265-residue chain is Pre-mRNA-splicing factor cwf15 (265 aa).

Disordered regions lie at residues 1–31 (MTTA…ALPA) and 62–197 (AAHF…ALEQ). The segment covering 113 to 125 (EADEDASDSDDSV) has biased composition (acidic residues). Positions 143 to 155 (SNSQESVDSSNSE) are enriched in low complexity. Residues 155 to 205 (ESSDEESDSEDETQQLLRELENIKQERKREQMLQEEKNRALEQEKREREIA) are a coiled coil. Over residues 156–167 (SSDEESDSEDET) the composition is skewed to acidic residues. Residues 172–197 (RELENIKQERKREQMLQEEKNRALEQ) show a composition bias toward basic and acidic residues.

It belongs to the CWC15 family. Belongs to the 40S cdc5-associated complex (or cwf complex), a spliceosome sub-complex reminiscent of a late-stage spliceosome composed of the U2, U5 and U6 snRNAs and at least brr2, cdc5, cwf2/prp3, cwf3/syf1, cwf4/syf3, cwf5/ecm2, spp42/cwf6, cwf7/spf27, cwf8, cwf9, cwf10, cwf11, cwf12, prp45/cwf13, cwf14, cwf15, cwf16, cwf17, cwf18, cwf19, cwf20, cwf21, cwf22, cwf23, cwf24, cwf25, cwf26, cyp7/cwf27, cwf28, cwf29/ist3, lea1, msl1, prp5/cwf1, prp10, prp12/sap130, prp17, prp22, sap61, sap62, sap114, sap145, slu7, smb1, smd1, smd3, smf1, smg1 and syf2.

It localises to the nucleus. Functionally, involved in pre-mRNA splicing. This is Pre-mRNA-splicing factor cwf15 (cwf15) from Schizosaccharomyces pombe (strain 972 / ATCC 24843) (Fission yeast).